Here is a 350-residue protein sequence, read N- to C-terminus: MQFIEIVEKLKKGQSGVVDFKIKNNPVILTAASLENAKDNDISFLDNNSPLNLRNLIETSKASALLLPANDTYIIEIAKKISVDWIILKEPKIAFAETLEFLYPSNVESEGIHKSAVIGQNVKIGLGVSIGANAYIGDNTEIGAGTIIHAGVVLYRNVRIGSKNLIHANSVIHSGSKLGDKCVINANAVIGGEGFGFVPTSNGWKKMPQVGIVILKNKVEVGSGSTIDRPSVGETIIGEDTKIDNLVQIGHGVTTGKGCAMAAQVGIAGGAQIGDGVILAGQVGISNRVKIGDGVIASSKTGIVSNIEAGTVVSGFPAIPNKLWLRCSANFKKLPEIAKAIRQLDRKKSR.

His-251 serves as the catalytic Proton acceptor.

This sequence belongs to the transferase hexapeptide repeat family. LpxD subfamily. As to quaternary structure, homotrimer.

The catalysed reaction is a UDP-3-O-[(3R)-3-hydroxyacyl]-alpha-D-glucosamine + a (3R)-hydroxyacyl-[ACP] = a UDP-2-N,3-O-bis[(3R)-3-hydroxyacyl]-alpha-D-glucosamine + holo-[ACP] + H(+). It participates in bacterial outer membrane biogenesis; LPS lipid A biosynthesis. Functionally, catalyzes the N-acylation of UDP-3-O-acylglucosamine using 3-hydroxyacyl-ACP as the acyl donor. Is involved in the biosynthesis of lipid A, a phosphorylated glycolipid that anchors the lipopolysaccharide to the outer membrane of the cell. This chain is UDP-3-O-acylglucosamine N-acyltransferase, found in Prochlorococcus marinus (strain NATL2A).